Here is a 329-residue protein sequence, read N- to C-terminus: Thioredoxin domain-containing protein 6 (329 aa).

A Thioredoxin domain is found at 11–115 (QVNINTQELW…QKTILQQLEA (105 aa)). The NDK stretch occupies residues 157-303 (GKTCTLGIIK…LFPSFKFSDK (147 aa)). Positions 303–329 (KDKEAPPGAEAQTMVGPVEDPCMSERI) are disordered.

The protein belongs to the NDK family. In terms of assembly, monomer and homodimer. In terms of tissue distribution, expressed in lung airway epithelium (at protein level).

The protein resides in the cytoplasm. It localises to the cytoskeleton. Its subcellular location is the cilium axoneme. It is found in the dynein axonemal particle. Its function is as follows. May be a regulator of microtubule physiology. This chain is Thioredoxin domain-containing protein 6, found in Mus musculus (Mouse).